Reading from the N-terminus, the 325-residue chain is Beta-ketoacyl-[acyl-carrier-protein] synthase III (325 aa).

Catalysis depends on residues C119 and H252. Residues 253–257 (QANIR) are ACP-binding. The active site involves N282.

Belongs to the thiolase-like superfamily. FabH family. In terms of assembly, homodimer.

The protein resides in the cytoplasm. The enzyme catalyses malonyl-[ACP] + acetyl-CoA + H(+) = 3-oxobutanoyl-[ACP] + CO2 + CoA. It functions in the pathway lipid metabolism; fatty acid biosynthesis. Functionally, catalyzes the condensation reaction of fatty acid synthesis by the addition to an acyl acceptor of two carbons from malonyl-ACP. Catalyzes the first condensation reaction which initiates fatty acid synthesis and may therefore play a role in governing the total rate of fatty acid production. Possesses both acetoacetyl-ACP synthase and acetyl transacylase activities. Its substrate specificity determines the biosynthesis of branched-chain and/or straight-chain of fatty acids. The polypeptide is Beta-ketoacyl-[acyl-carrier-protein] synthase III (Delftia acidovorans (strain DSM 14801 / SPH-1)).